We begin with the raw amino-acid sequence, 120 residues long: Large ribosomal subunit protein uL24 (120 aa).

This sequence belongs to the universal ribosomal protein uL24 family. In terms of assembly, part of the 50S ribosomal subunit.

In terms of biological role, one of two assembly initiator proteins, it binds directly to the 5'-end of the 23S rRNA, where it nucleates assembly of the 50S subunit. Functionally, one of the proteins that surrounds the polypeptide exit tunnel on the outside of the subunit. This chain is Large ribosomal subunit protein uL24, found in Pseudarthrobacter chlorophenolicus (strain ATCC 700700 / DSM 12829 / CIP 107037 / JCM 12360 / KCTC 9906 / NCIMB 13794 / A6) (Arthrobacter chlorophenolicus).